Here is a 494-residue protein sequence, read N- to C-terminus: Glycogen synthase (494 aa).

Residue K24 participates in ADP-alpha-D-glucose binding.

Belongs to the glycosyltransferase 1 family. Bacterial/plant glycogen synthase subfamily.

It carries out the reaction [(1-&gt;4)-alpha-D-glucosyl](n) + ADP-alpha-D-glucose = [(1-&gt;4)-alpha-D-glucosyl](n+1) + ADP + H(+). The protein operates within glycan biosynthesis; glycogen biosynthesis. In terms of biological role, synthesizes alpha-1,4-glucan chains using ADP-glucose. This is Glycogen synthase from Aromatoleum aromaticum (strain DSM 19018 / LMG 30748 / EbN1) (Azoarcus sp. (strain EbN1)).